The primary structure comprises 330 residues: Ketol-acid reductoisomerase (NADP(+)) (330 aa).

Residues 1-181 enclose the KARI N-terminal Rossmann domain; sequence MKVYYEQDAT…GGARSGVIET (181 aa). Residues 24–27, R47, and 82–85 contribute to the NADP(+) site; these read YGSQ and DQVQ. The active site involves H107. G133 contacts NADP(+). The 146-residue stretch at 182–327 folds into the KARI C-terminal knotted domain; the sequence is TFKEETETDL…GKLRGMMPWL (146 aa). Residues D190, E194, E226, and E230 each coordinate Mg(2+). Position 251 (S251) interacts with substrate.

Belongs to the ketol-acid reductoisomerase family. Requires Mg(2+) as cofactor.

The enzyme catalyses (2R)-2,3-dihydroxy-3-methylbutanoate + NADP(+) = (2S)-2-acetolactate + NADPH + H(+). The catalysed reaction is (2R,3R)-2,3-dihydroxy-3-methylpentanoate + NADP(+) = (S)-2-ethyl-2-hydroxy-3-oxobutanoate + NADPH + H(+). The protein operates within amino-acid biosynthesis; L-isoleucine biosynthesis; L-isoleucine from 2-oxobutanoate: step 2/4. It functions in the pathway amino-acid biosynthesis; L-valine biosynthesis; L-valine from pyruvate: step 2/4. In terms of biological role, involved in the biosynthesis of branched-chain amino acids (BCAA). Catalyzes an alkyl-migration followed by a ketol-acid reduction of (S)-2-acetolactate (S2AL) to yield (R)-2,3-dihydroxy-isovalerate. In the isomerase reaction, S2AL is rearranged via a Mg-dependent methyl migration to produce 3-hydroxy-3-methyl-2-ketobutyrate (HMKB). In the reductase reaction, this 2-ketoacid undergoes a metal-dependent reduction by NADPH to yield (R)-2,3-dihydroxy-isovalerate. The sequence is that of Ketol-acid reductoisomerase (NADP(+)) from Nitratidesulfovibrio vulgaris (strain DSM 19637 / Miyazaki F) (Desulfovibrio vulgaris).